We begin with the raw amino-acid sequence, 311 residues long: Ribosomal protein L11 methyltransferase (311 aa).

S-adenosyl-L-methionine-binding residues include threonine 162, glycine 183, aspartate 205, and asparagine 248.

This sequence belongs to the methyltransferase superfamily. PrmA family.

It is found in the cytoplasm. It catalyses the reaction L-lysyl-[protein] + 3 S-adenosyl-L-methionine = N(6),N(6),N(6)-trimethyl-L-lysyl-[protein] + 3 S-adenosyl-L-homocysteine + 3 H(+). In terms of biological role, methylates ribosomal protein L11. In Bacillus subtilis (strain 168), this protein is Ribosomal protein L11 methyltransferase.